The primary structure comprises 432 residues: Glutamyl-tRNA reductase (432 aa).

Substrate is bound by residues 49 to 52 (TCNR), Ser101, 106 to 108 (ESQ), and Gln112. Cys50 (nucleophile) is an active-site residue. 181–186 (GTGETI) contributes to the NADP(+) binding site.

It belongs to the glutamyl-tRNA reductase family. Homodimer.

The catalysed reaction is (S)-4-amino-5-oxopentanoate + tRNA(Glu) + NADP(+) = L-glutamyl-tRNA(Glu) + NADPH + H(+). It participates in porphyrin-containing compound metabolism; protoporphyrin-IX biosynthesis; 5-aminolevulinate from L-glutamyl-tRNA(Glu): step 1/2. Functionally, catalyzes the NADPH-dependent reduction of glutamyl-tRNA(Glu) to glutamate 1-semialdehyde (GSA). The sequence is that of Glutamyl-tRNA reductase from Xylella fastidiosa (strain M12).